A 374-amino-acid chain; its full sequence is Patatin-2-Kuras 1 (374 aa).

The signal sequence occupies residues 1–11 (MILATTGSTCA). In terms of domain architecture, PNPLA spans 20–217 (LSIDGGGIKG…TVGDPALLSL (198 aa)). The GXGXXG motif lies at 24 to 29 (GGGIKG). The GXSXG signature appears at 63–67 (GTSTG). Ser-65 functions as the Nucleophile in the catalytic mechanism. N-linked (GlcNAc...) asparagine glycosylation occurs at Asn-103. Asp-203 (proton acceptor) is an active-site residue. A DGA/G motif is present at residues 203–205 (DGA). A coiled-coil region spans residues 309–372 (ENALTGTTTE…DRKKLRANKA (64 aa)).

The protein belongs to the patatin family. Tuber.

Its subcellular location is the vacuole. In terms of biological role, probable lipolytic acyl hydrolase (LAH), an activity which is thought to be involved in the response of tubers to pathogens. This is Patatin-2-Kuras 1 (pat2-k1) from Solanum tuberosum (Potato).